The sequence spans 624 residues: (-)-beta-phellandrene synthase 2, chloroplastic (624 aa).

A chloroplast-targeting transit peptide spans 1–48 (MAIVSSVPLASKSCLHKSLISSIHKLKPFCRTIPTLGMSRPGKYVMPS). Residues Asp375, Asp379, and Asp527 each contribute to the Mg(2+) site. Residues 375–379 (DDMYD) carry the DDXXD motif motif.

Belongs to the terpene synthase family. Tpsd subfamily. Mg(2+) serves as cofactor. Mn(2+) is required as a cofactor.

Its subcellular location is the plastid. It localises to the chloroplast. The catalysed reaction is (2E)-geranyl diphosphate = (-)-beta-phellandrene + diphosphate. Its pathway is terpene metabolism; oleoresin biosynthesis. In terms of biological role, terpene synthase (TPS) involved in the biosynthesis of monoterpene natural products included in conifer oleoresin secretions and volatile emissions; these compounds contribute to biotic and abiotic stress defense against herbivores and pathogens. Catalyzes the conversion of (2E)-geranyl diphosphate (GPP) to (-)-beta-phellandrene. This Picea sitchensis (Sitka spruce) protein is (-)-beta-phellandrene synthase 2, chloroplastic.